The chain runs to 182 residues: Lipoprotein signal peptidase (182 aa).

The next 3 membrane-spanning stretches (helical) occupy residues 12 to 32 (VAVFACVAAAALIVDQLTKAW), 68 to 88 (ATWVISLLAVVACVALAVAGV), and 91 to 111 (VSMKWSVAISFAFAGALGNLI). Active-site residues include D127 and D140. The helical transmembrane segment at 135 to 155 (VGNVADIYLVVAGVVLVILIL) threads the bilayer.

It belongs to the peptidase A8 family.

The protein resides in the cell membrane. The enzyme catalyses Release of signal peptides from bacterial membrane prolipoproteins. Hydrolyzes -Xaa-Yaa-Zaa-|-(S,diacylglyceryl)Cys-, in which Xaa is hydrophobic (preferably Leu), and Yaa (Ala or Ser) and Zaa (Gly or Ala) have small, neutral side chains.. The protein operates within protein modification; lipoprotein biosynthesis (signal peptide cleavage). In terms of biological role, this protein specifically catalyzes the removal of signal peptides from prolipoproteins. This chain is Lipoprotein signal peptidase, found in Bifidobacterium longum (strain DJO10A).